The sequence spans 89 residues: Putative defensin-like protein 230 (89 aa).

The N-terminal stretch at methionine 1–alanine 26 is a signal peptide. 4 disulfides stabilise this stretch: cysteine 30–cysteine 84, cysteine 40–cysteine 65, cysteine 48–cysteine 78, and cysteine 63–cysteine 80.

It belongs to the DEFL family.

It localises to the secreted. The sequence is that of Putative defensin-like protein 230 (SCRL24) from Arabidopsis thaliana (Mouse-ear cress).